The primary structure comprises 201 residues: Eukaryotic translation initiation factor 4E-5 (201 aa).

Cysteines 122 and 126 form a disulfide.

Belongs to the eukaryotic initiation factor 4E family. As to quaternary structure, eIF4F is a multi-subunit complex, the composition of which varies with external and internal environmental conditions. It is composed of at least eIF4A, eIF4E and eIF4G. eIF4E is also known to interact with other partners. As to expression, enriched in the germline.

Recognizes and binds the 7-methylguanosine-containing mRNA cap during an early step in the initiation of protein synthesis and facilitates ribosome binding by inducing the unwinding of the mRNAs secondary structures. All 5 eIF4E proteins bind monomethyl cap structures. Only ife-1, ife-2 and ife-5 bind trimethyl cap structures which result from trans-splicing. Translation of trimethyl cap structure mRNAs may be regulated by intracellular redox state; disulfide bonds change the width and depth of the cap-binding cavity determining selectivity to mRNA caps. In Caenorhabditis elegans, this protein is Eukaryotic translation initiation factor 4E-5 (ife-5).